The primary structure comprises 118 residues: Large ribosomal subunit protein uL22c (118 aa).

It belongs to the universal ribosomal protein uL22 family. In terms of assembly, part of the 50S ribosomal subunit.

The protein localises to the plastid. Its subcellular location is the chloroplast. This protein binds specifically to 23S rRNA. Functionally, the globular domain of the protein is located near the polypeptide exit tunnel on the outside of the subunit, while an extended beta-hairpin is found that lines the wall of the exit tunnel in the center of the 70S ribosome. This chain is Large ribosomal subunit protein uL22c (rpl22), found in Physcomitrium patens (Spreading-leaved earth moss).